The following is a 267-amino-acid chain: Oxidoreductase ordB (267 aa).

The protein belongs to the avfA family.

Its pathway is mycotoxin biosynthesis. In terms of biological role, oxidoreductase; part of the fragmented gene cluster that mediates the biosynthesis of dothistromin (DOTH), a polyketide toxin very similar in structure to the aflatoxin precursor, versicolorin B. The first step of the pathway is the conversion of acetate to norsolorinic acid (NOR) and requires the fatty acid synthase subunits hexA and hexB, as well as the polyketide synthase pksA. PksA combines a hexanoyl starter unit and 7 malonyl-CoA extender units to synthesize the precursor NOR. The hexanoyl starter unit is provided to the acyl-carrier protein (ACP) domain by the fungal fatty acid synthase hexA/hexB. The second step is the conversion of NOR to averantin (AVN) and requires the norsolorinic acid ketoreductase nor1, which catalyzes the dehydration of norsolorinic acid to form (1'S)-averantin. The cytochrome P450 monooxygenase avnA then catalyzes the hydroxylation of AVN to 5'hydroxyaverantin (HAVN). The next step is performed by adhA that transforms HAVN to averufin (AVF). Averufin might then be converted to hydroxyversicolorone by cypX and avfA. Hydroxyversicolorone is further converted versiconal hemiacetal acetate (VHA) by moxY. VHA is then the substrate for the versiconal hemiacetal acetate esterase est1 to yield versiconal (VAL). Versicolorin B synthase vbsA then converts VAL to versicolorin B (VERB) by closing the bisfuran ring. Then, the activity of the versicolorin B desaturase verB leads to versicolorin A (VERA). DotB, a predicted chloroperoxidase, may perform epoxidation of the A-ring of VERA. Alternatively, a cytochrome P450, such as cypX or avnA could catalyze this step. It is also possible that another, uncharacterized, cytochrome P450 enzyme is responsible for this step. Opening of the epoxide could potentially be achieved by the epoxide hydrolase epoA. However, epoA seems not to be required for DOTH biosynthesis, but other epoxide hydrolases may have the ability to complement this hydrolysis. Alternatively, opening of the epoxide ring could be achieved non-enzymatically. The next step is the deoxygenation of ring A to yield the 5,8-dihydroxyanthraquinone which is most likely catalyzed by the NADPH dehydrogenase encoded by ver1. The last stages of DOTH biosynthesis are proposed to involve hydroxylation of the bisfuran. OrdB and norB might have oxidative roles here. An alternative possibility is that cytochrome P450 monoogenases such as avnA and cypX might perform these steps in addition to previously proposed steps. This is Oxidoreductase ordB from Dothistroma septosporum (strain NZE10 / CBS 128990) (Red band needle blight fungus).